Consider the following 169-residue polypeptide: N5-carboxyaminoimidazole ribonucleotide mutase (169 aa).

Positions 16, 19, and 46 each coordinate substrate.

The protein belongs to the AIR carboxylase family. Class I subfamily.

The enzyme catalyses 5-carboxyamino-1-(5-phospho-D-ribosyl)imidazole + H(+) = 5-amino-1-(5-phospho-D-ribosyl)imidazole-4-carboxylate. The protein operates within purine metabolism; IMP biosynthesis via de novo pathway; 5-amino-1-(5-phospho-D-ribosyl)imidazole-4-carboxylate from 5-amino-1-(5-phospho-D-ribosyl)imidazole (N5-CAIR route): step 2/2. Catalyzes the conversion of N5-carboxyaminoimidazole ribonucleotide (N5-CAIR) to 4-carboxy-5-aminoimidazole ribonucleotide (CAIR). This chain is N5-carboxyaminoimidazole ribonucleotide mutase, found in Escherichia coli O157:H7.